Here is a 407-residue protein sequence, read N- to C-terminus: Naringenin 8-dimethylallyltransferase 2, chloroplastic (407 aa).

Residues 1-23 (MGFVLPASFPGASSITTGGSCLR) constitute a chloroplast transit peptide. Helical transmembrane passes span 117–137 (FCRPYAIFSVVLGATFKSLVA), 145–165 (SLAFFIGWLQVVVAVICIHIF), 206–226 (ILGLGFAWIVGSWPLFWTVFI), 248–268 (VLTAISFIANVAVTRSLGFFL), 285–305 (LIFCTAIVSIYAIVIALFKDI), 328–348 (VFWICVSLLEMAYGVTILVGA), 352–372 (ILWSKIITVLGHAILASVLWY), and 383–403 (VVLQSFYMFIWKLHTAEYCLI).

This sequence belongs to the UbiA prenyltransferase family. The cofactor is Mg(2+). Mn(2+) serves as cofactor.

The protein localises to the plastid. The protein resides in the chloroplast membrane. The enzyme catalyses (2S)-naringenin + dimethylallyl diphosphate = sophoraflavanone B + diphosphate. Its function is as follows. Involved in the biosynthesis of sophoraflavanone G (SFG). Can use flavanones (naringenin, liquiritigenin and hesperetin) as substrates, but not flavonols or isoflavones. Shows a strict specificity for dimethylallyl diphosphate. This is Naringenin 8-dimethylallyltransferase 2, chloroplastic (N8DT-2) from Sophora flavescens (Shrubby sophora).